The following is a 114-amino-acid chain: Aspartate 1-decarboxylase (114 aa).

The Schiff-base intermediate with substrate; via pyruvic acid role is filled by Ser25. Residue Ser25 is modified to Pyruvic acid (Ser). Substrate is bound at residue Thr57. Tyr58 (proton donor) is an active-site residue. 71-73 provides a ligand contact to substrate; sequence GAA.

It belongs to the PanD family. Heterooctamer of four alpha and four beta subunits. It depends on pyruvate as a cofactor. Post-translationally, is synthesized initially as an inactive proenzyme, which is activated by self-cleavage at a specific serine bond to produce a beta-subunit with a hydroxyl group at its C-terminus and an alpha-subunit with a pyruvoyl group at its N-terminus.

It is found in the cytoplasm. The catalysed reaction is L-aspartate + H(+) = beta-alanine + CO2. It functions in the pathway cofactor biosynthesis; (R)-pantothenate biosynthesis; beta-alanine from L-aspartate: step 1/1. Functionally, catalyzes the pyruvoyl-dependent decarboxylation of aspartate to produce beta-alanine. This is Aspartate 1-decarboxylase from Campylobacter hominis (strain ATCC BAA-381 / DSM 21671 / CCUG 45161 / LMG 19568 / NCTC 13146 / CH001A).